Here is a 228-residue protein sequence, read N- to C-terminus: Cytochrome c oxidase subunit 2 (228 aa).

Over 1 to 26 (MRTWSNFNLQNSASPLMEQIIFFHDH) the chain is Mitochondrial intermembrane. Residues 27 to 48 (TLIILIMITILVGYIMINLFFN) form a helical membrane-spanning segment. Topologically, residues 49-62 (KFINRFFLVGQMIE) are mitochondrial matrix. The helical transmembrane segment at 63-82 (LIWTVLPAITLIFIALPSLR) threads the bilayer. Over 83–228 (LLYLLDELNN…FINWINNYSY (146 aa)) the chain is Mitochondrial intermembrane. Positions 161, 196, 198, 200, 204, and 207 each coordinate Cu cation. Position 198 (glutamate 198) interacts with Mg(2+).

Belongs to the cytochrome c oxidase subunit 2 family. As to quaternary structure, component of the cytochrome c oxidase (complex IV, CIV), a multisubunit enzyme composed of a catalytic core of 3 subunits and several supernumerary subunits. The complex exists as a monomer or a dimer and forms supercomplexes (SCs) in the inner mitochondrial membrane with ubiquinol-cytochrome c oxidoreductase (cytochrome b-c1 complex, complex III, CIII). The cofactor is Cu cation.

The protein resides in the mitochondrion inner membrane. It catalyses the reaction 4 Fe(II)-[cytochrome c] + O2 + 8 H(+)(in) = 4 Fe(III)-[cytochrome c] + 2 H2O + 4 H(+)(out). Its function is as follows. Component of the cytochrome c oxidase, the last enzyme in the mitochondrial electron transport chain which drives oxidative phosphorylation. The respiratory chain contains 3 multisubunit complexes succinate dehydrogenase (complex II, CII), ubiquinol-cytochrome c oxidoreductase (cytochrome b-c1 complex, complex III, CIII) and cytochrome c oxidase (complex IV, CIV), that cooperate to transfer electrons derived from NADH and succinate to molecular oxygen, creating an electrochemical gradient over the inner membrane that drives transmembrane transport and the ATP synthase. Cytochrome c oxidase is the component of the respiratory chain that catalyzes the reduction of oxygen to water. Electrons originating from reduced cytochrome c in the intermembrane space (IMS) are transferred via the dinuclear copper A center (CU(A)) of subunit 2 and heme A of subunit 1 to the active site in subunit 1, a binuclear center (BNC) formed by heme A3 and copper B (CU(B)). The BNC reduces molecular oxygen to 2 water molecules using 4 electrons from cytochrome c in the IMS and 4 protons from the mitochondrial matrix. The sequence is that of Cytochrome c oxidase subunit 2 (COII) from Galleria mellonella (Greater wax moth).